Reading from the N-terminus, the 513-residue chain is Lysine--tRNA ligase (513 aa).

Over residues 1–11 (MTEPTQPNAAQ) the composition is skewed to polar residues. The tract at residues 1–22 (MTEPTQPNAAQPNVVPEVDDNK) is disordered. Positions 423 and 430 each coordinate Mg(2+).

Belongs to the class-II aminoacyl-tRNA synthetase family. Homodimer. It depends on Mg(2+) as a cofactor.

The protein localises to the cytoplasm. It catalyses the reaction tRNA(Lys) + L-lysine + ATP = L-lysyl-tRNA(Lys) + AMP + diphosphate. The polypeptide is Lysine--tRNA ligase (Paraburkholderia xenovorans (strain LB400)).